The sequence spans 183 residues: Translation initiation factor IF-3 (183 aa).

It belongs to the IF-3 family. Monomer.

It is found in the cytoplasm. Its function is as follows. IF-3 binds to the 30S ribosomal subunit and shifts the equilibrium between 70S ribosomes and their 50S and 30S subunits in favor of the free subunits, thus enhancing the availability of 30S subunits on which protein synthesis initiation begins. The chain is Translation initiation factor IF-3 from Pseudomonas aeruginosa (strain ATCC 15692 / DSM 22644 / CIP 104116 / JCM 14847 / LMG 12228 / 1C / PRS 101 / PAO1).